The primary structure comprises 1054 residues: DIS3-like exonuclease 1 (1054 aa).

Residues 236 to 309 (AGIKSGRYIQ…PKNEWKGRTV (74 aa)) form the CSD1 domain. In terms of domain architecture, CSD2 spans 365 to 431 (ILVTPWDYRI…GEIATILVEN (67 aa)). The region spanning 465–816 (RKDLRKSHLV…VHRLLMAAIS (352 aa)) is the RNB domain. Position 989 is a phosphoserine (Ser989).

It belongs to the RNR ribonuclease family. Component of the RNA exosome complex. The catalytically inactive RNA exosome core (Exo-9) complex is believed to associate with catalytic subunits EXOSC10, and DIS3 or DIS3L in cytoplasmic- and nuclear-specific RNA exosome complex forms. Mg(2+) is required as a cofactor.

The protein localises to the cytoplasm. It catalyses the reaction Exonucleolytic cleavage in the 3'- to 5'-direction to yield nucleoside 5'-phosphates.. Functionally, catalytic component of the RNA exosome complex which has 3'-&gt;5' exoribonuclease activity and participates in a multitude of cellular RNA processing and degradation events. In the cytoplasm, the RNA exosome complex is involved in general mRNA turnover and specifically degrades inherently unstable mRNAs containing AU-rich elements (AREs) within their 3' untranslated regions, and in RNA surveillance pathways, preventing translation of aberrant mRNAs. It seems to be involved in degradation of histone mRNA. The protein is DIS3-like exonuclease 1 (DIS3L) of Homo sapiens (Human).